We begin with the raw amino-acid sequence, 92 residues long: Small ribosomal subunit protein uS19 (92 aa).

Belongs to the universal ribosomal protein uS19 family.

Functionally, protein S19 forms a complex with S13 that binds strongly to the 16S ribosomal RNA. The chain is Small ribosomal subunit protein uS19 from Lactococcus lactis subsp. cremoris (strain MG1363).